We begin with the raw amino-acid sequence, 258 residues long: Phosphoadenosine 5'-phosphosulfate reductase (258 aa).

Cys-244 (nucleophile; cysteine thiosulfonate intermediate) is an active-site residue.

It belongs to the PAPS reductase family. CysH subfamily.

It is found in the cytoplasm. It catalyses the reaction [thioredoxin]-disulfide + sulfite + adenosine 3',5'-bisphosphate + 2 H(+) = [thioredoxin]-dithiol + 3'-phosphoadenylyl sulfate. It functions in the pathway sulfur metabolism; hydrogen sulfide biosynthesis; sulfite from sulfate: step 3/3. Catalyzes the formation of sulfite from phosphoadenosine 5'-phosphosulfate (PAPS) using thioredoxin as an electron donor. In Vibrio vulnificus (strain CMCP6), this protein is Phosphoadenosine 5'-phosphosulfate reductase.